Consider the following 167-residue polypeptide: Transmembrane protein 229B (167 aa).

Residues 1–14 lie on the Cytoplasmic side of the membrane; that stretch reads MASAEPLTALSRWY. A helical membrane pass occupies residues 15–35; the sequence is LYAIHGYFCEVMFTAAWEFVV. Residues 36–40 lie on the Extracellular side of the membrane; the sequence is NFNWK. The chain crosses the membrane as a helical span at residues 41 to 61; sequence FPGVTSVWALFIYGTSILIVE. Over 62–73 the chain is Cytoplasmic; sequence RMYLRLRGRCPL. The helical transmembrane segment at 74-94 threads the bilayer; the sequence is LLRCLIYTLWTYLWEFTTGFI. The Extracellular portion of the chain corresponds to 95-111; that stretch reads LRQFNACPWDYSQFDFD. The helical transmembrane segment at 112 to 132 threads the bilayer; that stretch reads FMGLITLEYAVPWFCGALLVE. Residues 133-167 are Cytoplasmic-facing; it reads QFVIRNTLRLRFDKDAEPGEPSGALALANGHVKTD.

This sequence belongs to the TMEM229 family.

The protein resides in the membrane. This Bos taurus (Bovine) protein is Transmembrane protein 229B (TMEM229B).